The following is a 230-amino-acid chain: Heptaprenylglyceryl phosphate synthase (230 aa).

Sn-glycerol 1-phosphate is bound at residue Lys12. Mg(2+)-binding residues include Asp14 and Thr40. Sn-glycerol 1-phosphate-binding positions include Tyr159–Gly164, Gly189, and Gly209–Asp210.

The protein belongs to the GGGP/HepGP synthase family. Group I subfamily. As to quaternary structure, homodimer. It depends on Mg(2+) as a cofactor.

It carries out the reaction sn-glycerol 1-phosphate + all-trans-heptaprenyl diphosphate = 3-heptaprenyl-sn-glycero-1-phosphate + diphosphate. It functions in the pathway membrane lipid metabolism; glycerophospholipid metabolism. Functionally, prenyltransferase that catalyzes in vivo the transfer of the heptaprenyl moiety of heptaprenyl pyrophosphate (HepPP; 35 carbon atoms) to the C3 hydroxyl of sn-glycerol-1-phosphate (G1P), producing heptaprenylglyceryl phosphate (HepGP). This reaction is an ether-bond-formation step in the biosynthesis of archaea-type G1P-based membrane lipids found in Bacillales. This is Heptaprenylglyceryl phosphate synthase from Staphylococcus aureus (strain bovine RF122 / ET3-1).